A 392-amino-acid polypeptide reads, in one-letter code: Pannexin-3 (392 aa).

The Cytoplasmic segment spans residues 1–39 (MSLAHTAAEYMLSDALLPDRRGPRLKGLRLELPLDRIVK). The chain crosses the membrane as a helical span at residues 40-60 (FVAVGSPLLLMSLAFAQEFSS). Residues 61 to 113 (GSPISCFSPSNFSIRQAAYVDSSCWDSLLHHKQDGPGQDKMKSLWPHKALPYS) lie on the Extracellular side of the membrane. Asparagine 71 carries an N-linked (GlcNAc...) asparagine glycan. A helical transmembrane segment spans residues 114–134 (LLALALLMYLPVLLWQYAAVP). The Cytoplasmic portion of the chain corresponds to 135-215 (ALSSDLLFII…VATYLLRNSL (81 aa)). The helical transmembrane segment at 216 to 236 (LLIFTSATYLYLGHFHLDVFF) threads the bilayer. The Extracellular segment spans residues 237-267 (QEEFSCSIKTGLLSDETHVPNLITCRLTSLS). The helical transmembrane segment at 268–288 (IFQIVSLSSVAIYTILVPVII) threads the bilayer. The Cytoplasmic segment spans residues 289-392 (YNLTRLCRWD…LTNSACDEHP (104 aa)).

Belongs to the pannexin family. As to quaternary structure, homoheptameric.

It is found in the cell membrane. The protein localises to the cell junction. The protein resides in the gap junction. Its subcellular location is the endoplasmic reticulum membrane. It carries out the reaction Ca(2+)(in) = Ca(2+)(out). The catalysed reaction is ATP(in) = ATP(out). In terms of biological role, regulator of osteoblast differentiation by functionning as a Ca(2+) channel in the endoplasmic reticulum which regulates calmodulin (CaM) pathways. Allows ATP release into the extracellular space and activation or purinergic receptors. The polypeptide is Pannexin-3 (Homo sapiens (Human)).